A 783-amino-acid chain; its full sequence is Polyribonucleotide nucleotidyltransferase 1, mitochondrial (783 aa).

The N-terminal 46 residues, M1–A46, are a transit peptide targeting the mitochondrion. K250, K264, K285, and K289 each carry N6-acetyllysine. N6-succinyllysine is present on K552. The KH domain occupies P605 to I664. The region spanning G679–K750 is the S1 motif domain. Residues S754 and S782 each carry the phosphoserine modification.

This sequence belongs to the polyribonucleotide nucleotidyltransferase family. Homotrimer; in free form. Homooligomer. Component of the mitochondrial degradosome (mtEXO) complex which is a heteropentamer containing 2 copies of SUPV3L1 and 3 copies of PNPT1. As part of the mitochondrial degradosome complex, interacts with GRSF1 in an RNA-dependent manner; the interaction enhances the activity of the complex. Interacts with TCL1A; the interaction has no effect on PNPT1 exonuclease activity.

The protein resides in the cytoplasm. It is found in the mitochondrion matrix. It localises to the mitochondrion intermembrane space. The catalysed reaction is RNA(n+1) + phosphate = RNA(n) + a ribonucleoside 5'-diphosphate. In terms of biological role, RNA-binding protein implicated in numerous RNA metabolic processes. Catalyzes the phosphorolysis of single-stranded polyribonucleotides processively in the 3'-to-5' direction. Mitochondrial intermembrane factor with RNA-processing exoribonulease activity. Component of the mitochondrial degradosome (mtEXO) complex, that degrades 3' overhang double-stranded RNA with a 3'-to-5' directionality in an ATP-dependent manner. Involved in the degradation of non-coding mitochondrial transcripts (MT-ncRNA) and tRNA-like molecules. Required for correct processing and polyadenylation of mitochondrial mRNAs. Plays a role as a cytoplasmic RNA import factor that mediates the translocation of small RNA components like the 5S RNA, the RNA subunit of ribonuclease P and the mitochondrial RNA-processing (MRP) RNA, into the mitochondrial matrix. Plays a role in mitochondrial morphogenesis and respiration; regulates the expression of the electron transport chain (ETC) components at the mRNA and protein levels. In the cytoplasm, shows a 3'-to-5' exoribonuclease mediating mRNA degradation activity; degrades c-myc mRNA upon treatment with IFNB1/IFN-beta, resulting in a growth arrest in melanoma cells. Regulates the stability of specific mature miRNAs in melanoma cells; specifically and selectively degrades miR-221, preferentially. Also plays a role in RNA cell surveillance by cleaning up oxidized RNAs. Binds to the RNA subunit of ribonuclease P, MRP RNA and miR-221 microRNA. This Pongo abelii (Sumatran orangutan) protein is Polyribonucleotide nucleotidyltransferase 1, mitochondrial (PNPT1).